The chain runs to 390 residues: Probable purine permease 10 (390 aa).

10 consecutive transmembrane segments (helical) span residues 44–64 (WLRVTLYTFFVISGQTVATIL), 78–98 (LATVVQLVGFPVLLPYYILSF), 117–137 (VLVYVVLGLLVGADCYLYSIG), 140–160 (YLPVSTYSLICASQLAFNAFF), 169–189 (LTPIILNSLFLLTISSTLLAF), 204–224 (YVKGFICTVAASAGYGLVLSL), 241–261 (VMDMIIYVSLVASCVSVVGLF), 287–307 (LVWTAVTWQVFSIGGTGLIFE), 312–332 (FSNAISVLGLPVVPILAVIIF), and 336–356 (MNGLKVISMILAIWGFTSYVY). Positions 370–390 (EITTTESPDPPEAEESTWQSK) are disordered.

This sequence belongs to the purine permeases (TC 2.A.7.14) family.

Its subcellular location is the membrane. This Arabidopsis thaliana (Mouse-ear cress) protein is Probable purine permease 10 (PUP10).